Consider the following 467-residue polypeptide: Tubulointerstitial nephritis antigen-like (467 aa).

A signal peptide spans 1–21 (MWRCPLGLLLLLPLAGHLALG). An SMB domain is found at 50–98 (EQDLCCRGRADDCALPYLGAICYCDLFCNRTVSDCCPDFWDFCLGVPPP). Cystine bridges form between Cys-54–Cys-73, Cys-71–Cys-73, Cys-71–Cys-85, Cys-77–Cys-84, and Cys-85–Cys-92. N-linked (GlcNAc...) asparagine glycosylation is present at Asn-78. Residue Asn-161 is glycosylated (N-linked (GlcNAc...) asparagine).

The protein belongs to the peptidase C1 family. Post-translationally, glycosylated. In terms of tissue distribution, highly expressed in aorta, heart, placenta, kidney and a colorectal adenocarcinoma cell line. Moderately expressed in skeletal muscle, pancreas, lung, lymph nodes, adrenal gland, bone marrow and thyroid. Weakly expressed in colon, small intestine, ovary, spleen, testis and prostate. Predominantly found in vascular smooth muscle cells, but also in cardiac and skeletal muscle cells as well as kidney.

Its subcellular location is the secreted. Its function is as follows. May be implicated in the adrenocortical zonation and in mechanisms for repressing the CYP11B1 gene expression in adrenocortical cells. This is a non catalytic peptidase C1 family protein. In Homo sapiens (Human), this protein is Tubulointerstitial nephritis antigen-like (TINAGL1).